A 118-amino-acid polypeptide reads, in one-letter code: MTSSDTQNNKTLAAMKNFAEQYAKRTDTYFCSDLSVTAVVIEGLARHKEELGSPLCPCRHYEDKEAEVKNTFWNCPCVPMRERKECHCMLFLTPDNDFAGDAQDIPMETLEEVKASMA.

Cys56 provides a ligand contact to [4Fe-4S] cluster. The Nucleophile role is filled by Cys58. A disulfide bridge links Cys58 with Cys88. 3 residues coordinate [4Fe-4S] cluster: Cys75, Cys77, and Cys86.

It belongs to the ferredoxin thioredoxin reductase beta subunit family. As to quaternary structure, heterodimer of subunit A (variable subunit) and subunit B (catalytic subunit). Heterodimeric FTR forms a complex with ferredoxin and thioredoxin. [4Fe-4S] cluster is required as a cofactor.

It carries out the reaction [thioredoxin]-disulfide + 2 reduced [2Fe-2S]-[ferredoxin] + 2 H(+) = [thioredoxin]-dithiol + 2 oxidized [2Fe-2S]-[ferredoxin]. Its function is as follows. Catalytic subunit of the ferredoxin-thioredoxin reductase (FTR), which catalyzes the two-electron reduction of thioredoxins by the electrons provided by reduced ferredoxin. The polypeptide is Ferredoxin-thioredoxin reductase, catalytic chain (Synechocystis sp. (strain ATCC 27184 / PCC 6803 / Kazusa)).